Reading from the N-terminus, the 466-residue chain is Cysteine--tRNA ligase (466 aa).

Zn(2+) is bound at residue Cys-28. The 'HIGH' region signature appears at 30-40 (PTVYNYIHIGN). The Zn(2+) site is built by Cys-208, His-233, and Glu-237. The short motif at 265–269 (KMSKS) is the 'KMSKS' region element. Position 268 (Lys-268) interacts with ATP.

Belongs to the class-I aminoacyl-tRNA synthetase family. In terms of assembly, monomer. It depends on Zn(2+) as a cofactor.

It is found in the cytoplasm. The enzyme catalyses tRNA(Cys) + L-cysteine + ATP = L-cysteinyl-tRNA(Cys) + AMP + diphosphate. The protein is Cysteine--tRNA ligase of Staphylococcus aureus (strain MRSA252).